Consider the following 337-residue polypeptide: tRNA N6-adenosine threonylcarbamoyltransferase (337 aa).

Residues H114 and H118 each coordinate Fe cation. Residues 136–140 (LVSGG), D169, G182, D186, and N275 contribute to the substrate site. D301 provides a ligand contact to Fe cation.

It belongs to the KAE1 / TsaD family. Fe(2+) serves as cofactor.

The protein localises to the cytoplasm. It carries out the reaction L-threonylcarbamoyladenylate + adenosine(37) in tRNA = N(6)-L-threonylcarbamoyladenosine(37) in tRNA + AMP + H(+). Its function is as follows. Required for the formation of a threonylcarbamoyl group on adenosine at position 37 (t(6)A37) in tRNAs that read codons beginning with adenine. Is involved in the transfer of the threonylcarbamoyl moiety of threonylcarbamoyl-AMP (TC-AMP) to the N6 group of A37, together with TsaE and TsaB. TsaD likely plays a direct catalytic role in this reaction. This Streptococcus thermophilus (strain CNRZ 1066) protein is tRNA N6-adenosine threonylcarbamoyltransferase.